A 124-amino-acid polypeptide reads, in one-letter code: Small ribosomal subunit protein uS13 (124 aa).

The disordered stretch occupies residues Arg-99–Ser-124. Over residues Gln-101 to Ser-124 the composition is skewed to basic residues.

It belongs to the universal ribosomal protein uS13 family. As to quaternary structure, part of the 30S ribosomal subunit. Forms a loose heterodimer with protein S19. Forms two bridges to the 50S subunit in the 70S ribosome.

Functionally, located at the top of the head of the 30S subunit, it contacts several helices of the 16S rRNA. In the 70S ribosome it contacts the 23S rRNA (bridge B1a) and protein L5 of the 50S subunit (bridge B1b), connecting the 2 subunits; these bridges are implicated in subunit movement. Contacts the tRNAs in the A and P-sites. The protein is Small ribosomal subunit protein uS13 of Caldicellulosiruptor saccharolyticus (strain ATCC 43494 / DSM 8903 / Tp8T 6331).